A 293-amino-acid polypeptide reads, in one-letter code: Cytidine deaminase 6 (293 aa).

CMP/dCMP-type deaminase domains lie at 16-147 (RGPS…FGPD) and 178-293 (EDCS…TNKN). Residue 57-59 (NVE) coordinates substrate. Zn(2+) is bound at residue histidine 70. Glutamate 72 (proton donor) is an active-site residue. The Zn(2+) site is built by cysteine 103 and cysteine 106.

The protein belongs to the cytidine and deoxycytidylate deaminase family. As to quaternary structure, homodimer. Zn(2+) is required as a cofactor.

The catalysed reaction is cytidine + H2O + H(+) = uridine + NH4(+). It catalyses the reaction 2'-deoxycytidine + H2O + H(+) = 2'-deoxyuridine + NH4(+). Its function is as follows. This enzyme scavenges exogenous and endogenous cytidine and 2'-deoxycytidine for UMP synthesis. The protein is Cytidine deaminase 6 (CDA6) of Arabidopsis thaliana (Mouse-ear cress).